The sequence spans 93 residues: Exodeoxyribonuclease 7 small subunit (93 aa).

Over residues 1-17 (MAKSSASSLSSAKPVAA) the composition is skewed to low complexity. A disordered region spans residues 1-22 (MAKSSASSLSSAKPVAAGPDAS).

This sequence belongs to the XseB family. Heterooligomer composed of large and small subunits.

The protein localises to the cytoplasm. The enzyme catalyses Exonucleolytic cleavage in either 5'- to 3'- or 3'- to 5'-direction to yield nucleoside 5'-phosphates.. In terms of biological role, bidirectionally degrades single-stranded DNA into large acid-insoluble oligonucleotides, which are then degraded further into small acid-soluble oligonucleotides. This chain is Exodeoxyribonuclease 7 small subunit, found in Polaromonas naphthalenivorans (strain CJ2).